The sequence spans 227 residues: uncharacterized protein (227 aa).

The 114-residue stretch at 2 to 115 (KILMIEDNVS…TLVARIKAVI (114 aa)) folds into the Response regulatory domain. Asp-51 is subject to 4-aspartylphosphate. The segment at residues 128–226 (EDMIETECFT…VWGVGYKFDE (99 aa)) is a DNA-binding region (ompR/PhoB-type).

Phosphorylated by YclK.

The protein localises to the cytoplasm. Functionally, could be member of the two-component regulatory system YclK/YclJ. This is an uncharacterized protein from Bacillus subtilis (strain 168).